A 321-amino-acid polypeptide reads, in one-letter code: tRNA uridine(34) hydroxylase (321 aa).

The Rhodanese domain occupies 135–233 (DDPLTLVIDT…YLEEVPENES (99 aa)). Cysteine 193 (cysteine persulfide intermediate) is an active-site residue.

The protein belongs to the TrhO family.

It catalyses the reaction uridine(34) in tRNA + AH2 + O2 = 5-hydroxyuridine(34) in tRNA + A + H2O. Catalyzes oxygen-dependent 5-hydroxyuridine (ho5U) modification at position 34 in tRNAs. The sequence is that of tRNA uridine(34) hydroxylase from Prochlorococcus marinus (strain SARG / CCMP1375 / SS120).